The primary structure comprises 48 residues: uncharacterized protein (48 aa).

The chain crosses the membrane as a helical span at residues 18–38; it reads IIIKYWYIDLTITIFAFLILY.

Its subcellular location is the host membrane. This is an uncharacterized protein from Acidianus bottle-shaped virus (isolate Italy/Pozzuoli) (ABV).